The following is a 275-amino-acid chain: Undecaprenyl-diphosphatase (275 aa).

8 helical membrane-spanning segments follow: residues 4 to 24 (LNVIKAIILGIVEGFTEWLPI), 44 to 64 (AFMDMFNYVIQFGAILAVVVL), 85 to 105 (WTLWFKVILAVIPSVIIGFPL), 113 to 133 (LMQNWVVASMLILYGILFIVI), 149 to 169 (TLPWLTAFWIGCFQALSIIPG), 188 to 208 (FVGAEFSFFMAIPTMIGVSIL), 226 to 246 (IILLVGMVVSFIISIISIKFL), and 255 to 275 (FKVFGWYRIILGVLVLGAMFL).

This sequence belongs to the UppP family.

The protein localises to the cell membrane. It carries out the reaction di-trans,octa-cis-undecaprenyl diphosphate + H2O = di-trans,octa-cis-undecaprenyl phosphate + phosphate + H(+). Catalyzes the dephosphorylation of undecaprenyl diphosphate (UPP). Confers resistance to bacitracin. The chain is Undecaprenyl-diphosphatase from Latilactobacillus sakei subsp. sakei (strain 23K) (Lactobacillus sakei subsp. sakei).